Consider the following 599-residue polypeptide: MHLDNSSCNLASLNLMKFLRDDTASDGASGAGGNMSLDAERFAKVVELVITAMDISICFADFPTEKIGETTRAFRQLGIGYANLGALLMATGHAYDSDGGRALAGAITSLMTGTSYRRSAELAAVVGPYEGYARNADAHKRVMRQHADANTAAQRMDDLDTPVWAAATEAWQDVLRLGEQNRFRNAQASVLAPTGTIGLMMDCDTTGVEPDLALVKFKKLVGGGSMQIVNNTVPKALKRLGYQPEQVEAVVAHIAEHGNVIDAPGLKPEHYEVFDCAMGERAISPMGHVRMMAAAQPFLSGAISKTVNMPESATVEEIEEIYYEGWKLGLKALAIYRDNCKVGQPLSAKKKEEAKTEAPAEVEKVVEYRPVRKRLPKGRPGITTSFTVGGAEGYMTANSYPDDGLGEVFLKMSKQGSTLAGMMDAFSIAVSVGLQYGVPLETYVSKFTNMRFEPAGLTDDPDVRMAQSIVDYIFRRLALDFLPFETRSALGIHSAEERQRHLDTGSYEPAEDELDVEGLAQSAPRQAGPAKAATTAPAAKAQEPAAAPSPKQAHNSTELLEIQQGLNADAPLCFSCGTKMRRAGSCYVCEGCGSTSGCS.

193–197 is a substrate binding site; sequence PTGTI. Residues 519-555 form a disordered region; sequence LAQSAPRQAGPAKAATTAPAAKAQEPAAAPSPKQAHN. Positions 526–553 are enriched in low complexity; that stretch reads QAGPAKAATTAPAAKAQEPAAAPSPKQA.

This sequence belongs to the ribonucleoside diphosphate reductase class-2 family. Requires adenosylcob(III)alamin as cofactor.

It catalyses the reaction a 2'-deoxyribonucleoside 5'-diphosphate + [thioredoxin]-disulfide + H2O = a ribonucleoside 5'-diphosphate + [thioredoxin]-dithiol. Functionally, catalyzes the reduction of ribonucleotides to deoxyribonucleotides. May function to provide a pool of deoxyribonucleotide precursors for DNA repair during oxygen limitation and/or for immediate growth after restoration of oxygen. This is Vitamin B12-dependent ribonucleotide reductase (nrdJ) from Streptantibioticus cattleyicolor (Streptomyces cattleya).